Here is a 120-residue protein sequence, read N- to C-terminus: Inner membrane protein YidG (120 aa).

At methionine 1–serine 21 the chain is on the cytoplasmic side. The chain crosses the membrane as a helical span at residues leucine 22–isoleucine 39. The Periplasmic portion of the chain corresponds to lysine 40–methionine 48. The chain crosses the membrane as a helical span at residues leucine 49–threonine 68. The Cytoplasmic portion of the chain corresponds to arginine 69–lysine 90. The helical transmembrane segment at phenylalanine 91 to isoleucine 113 threads the bilayer. At valine 114–alanine 120 the chain is on the periplasmic side.

The protein resides in the cell inner membrane. The protein is Inner membrane protein YidG (yidG) of Escherichia coli O157:H7.